We begin with the raw amino-acid sequence, 261 residues long: 5'-nucleotidase SurE (261 aa).

4 residues coordinate a divalent metal cation: Asp17, Asp18, Ser48, and Asn104.

It belongs to the SurE nucleotidase family. Requires a divalent metal cation as cofactor.

The protein resides in the cytoplasm. The enzyme catalyses a ribonucleoside 5'-phosphate + H2O = a ribonucleoside + phosphate. Its function is as follows. Nucleotidase that shows phosphatase activity on nucleoside 5'-monophosphates. The polypeptide is 5'-nucleotidase SurE (Deinococcus geothermalis (strain DSM 11300 / CIP 105573 / AG-3a)).